The chain runs to 1178 residues: DNA-directed RNA polymerase subunit beta' (1178 aa).

The Zn(2+) site is built by Cys60, Cys62, Cys75, and Cys78. Mg(2+) is bound by residues Asp450, Asp452, and Asp454. Cys795, Cys869, Cys876, and Cys879 together coordinate Zn(2+).

This sequence belongs to the RNA polymerase beta' chain family. The RNAP catalytic core consists of 2 alpha, 1 beta, 1 beta' and 1 omega subunit. When a sigma factor is associated with the core the holoenzyme is formed, which can initiate transcription. Requires Mg(2+) as cofactor. Zn(2+) serves as cofactor.

The enzyme catalyses RNA(n) + a ribonucleoside 5'-triphosphate = RNA(n+1) + diphosphate. In terms of biological role, DNA-dependent RNA polymerase catalyzes the transcription of DNA into RNA using the four ribonucleoside triphosphates as substrates. This Clostridium botulinum (strain Okra / Type B1) protein is DNA-directed RNA polymerase subunit beta'.